We begin with the raw amino-acid sequence, 102 residues long: Small ribosomal subunit protein uS10 (102 aa).

This sequence belongs to the universal ribosomal protein uS10 family. In terms of assembly, part of the 30S ribosomal subunit.

Involved in the binding of tRNA to the ribosomes. This Cenarchaeum symbiosum (strain A) protein is Small ribosomal subunit protein uS10.